Reading from the N-terminus, the 667-residue chain is DNA ligase (667 aa).

Residues 32–36 (DSEYD), 81–82 (SL), and Glu110 each bind NAD(+). Lys112 acts as the N6-AMP-lysine intermediate in catalysis. Residues Arg133, Glu167, Lys283, and Lys307 each coordinate NAD(+). Zn(2+)-binding residues include Cys401, Cys404, Cys419, and Cys424. The region spanning 586–667 (EGHPEFSGKT…FVDKQNELNS (82 aa)) is the BRCT domain.

The protein belongs to the NAD-dependent DNA ligase family. LigA subfamily. Requires Mg(2+) as cofactor. Mn(2+) is required as a cofactor.

The enzyme catalyses NAD(+) + (deoxyribonucleotide)n-3'-hydroxyl + 5'-phospho-(deoxyribonucleotide)m = (deoxyribonucleotide)n+m + AMP + beta-nicotinamide D-nucleotide.. Functionally, DNA ligase that catalyzes the formation of phosphodiester linkages between 5'-phosphoryl and 3'-hydroxyl groups in double-stranded DNA using NAD as a coenzyme and as the energy source for the reaction. It is essential for DNA replication and repair of damaged DNA. This is DNA ligase from Staphylococcus aureus (strain Mu3 / ATCC 700698).